The following is a 177-amino-acid chain: Adenine phosphoribosyltransferase (177 aa).

It belongs to the purine/pyrimidine phosphoribosyltransferase family. As to quaternary structure, homodimer.

Its subcellular location is the cytoplasm. It catalyses the reaction AMP + diphosphate = 5-phospho-alpha-D-ribose 1-diphosphate + adenine. It functions in the pathway purine metabolism; AMP biosynthesis via salvage pathway; AMP from adenine: step 1/1. In terms of biological role, catalyzes a salvage reaction resulting in the formation of AMP, that is energically less costly than de novo synthesis. In Chlorobium phaeobacteroides (strain DSM 266 / SMG 266 / 2430), this protein is Adenine phosphoribosyltransferase.